The chain runs to 431 residues: UDP-N-acetylglucosamine 1-carboxyvinyltransferase (431 aa).

A phosphoenolpyruvate-binding site is contributed by Lys22–Asn23. Residue Arg102 coordinates UDP-N-acetyl-alpha-D-glucosamine. Cys126 (proton donor) is an active-site residue. Position 126 is a 2-(S-cysteinyl)pyruvic acid O-phosphothioketal (Cys126). Residues Arg131–Leu135, Asp316, and Ile338 each bind UDP-N-acetyl-alpha-D-glucosamine.

Belongs to the EPSP synthase family. MurA subfamily.

It localises to the cytoplasm. The catalysed reaction is phosphoenolpyruvate + UDP-N-acetyl-alpha-D-glucosamine = UDP-N-acetyl-3-O-(1-carboxyvinyl)-alpha-D-glucosamine + phosphate. It functions in the pathway cell wall biogenesis; peptidoglycan biosynthesis. In terms of biological role, cell wall formation. Adds enolpyruvyl to UDP-N-acetylglucosamine. This chain is UDP-N-acetylglucosamine 1-carboxyvinyltransferase, found in Beijerinckia indica subsp. indica (strain ATCC 9039 / DSM 1715 / NCIMB 8712).